The primary structure comprises 510 residues: NAD(P)H-quinone oxidoreductase subunit 2, chloroplastic (510 aa).

13 helical membrane-spanning segments follow: residues 26–46, 57–77, 99–119, 124–144, 149–169, 184–204, 227–247, 295–315, 323–343, 354–374, 395–415, 418–438, and 484–504; these read LFDG…ILLL, IPWL…ALLF, IFQV…VEYI, MAIT…MFLC, LITI…LSGY, LLMG…LYGL, PGIS…LSPA, WHLL…LIAI, MLAY…IVGD, YMLF…LFGL, ALSL…AGFF, LYLF…IALV, and MIVC…IIAI.

The protein belongs to the complex I subunit 2 family. In terms of assembly, NDH is composed of at least 16 different subunits, 5 of which are encoded in the nucleus.

It is found in the plastid. The protein resides in the chloroplast thylakoid membrane. It carries out the reaction a plastoquinone + NADH + (n+1) H(+)(in) = a plastoquinol + NAD(+) + n H(+)(out). It catalyses the reaction a plastoquinone + NADPH + (n+1) H(+)(in) = a plastoquinol + NADP(+) + n H(+)(out). NDH shuttles electrons from NAD(P)H:plastoquinone, via FMN and iron-sulfur (Fe-S) centers, to quinones in the photosynthetic chain and possibly in a chloroplast respiratory chain. The immediate electron acceptor for the enzyme in this species is believed to be plastoquinone. Couples the redox reaction to proton translocation, and thus conserves the redox energy in a proton gradient. In Trachelium caeruleum (Blue throatwort), this protein is NAD(P)H-quinone oxidoreductase subunit 2, chloroplastic.